The following is a 340-amino-acid chain: Anthranilate phosphoribosyltransferase (340 aa).

Residues Gly-79, 82–83 (GD), Ser-87, 89–92 (NIST), 107–115 (KHGNRSVSS), and Ser-119 each bind 5-phospho-alpha-D-ribose 1-diphosphate. Gly-79 serves as a coordination point for anthranilate. Ser-91 contributes to the Mg(2+) binding site. Asn-110 contacts anthranilate. Anthranilate is bound at residue Arg-165. Positions 224 and 225 each coordinate Mg(2+).

The protein belongs to the anthranilate phosphoribosyltransferase family. In terms of assembly, homodimer. The cofactor is Mg(2+).

It catalyses the reaction N-(5-phospho-beta-D-ribosyl)anthranilate + diphosphate = 5-phospho-alpha-D-ribose 1-diphosphate + anthranilate. It participates in amino-acid biosynthesis; L-tryptophan biosynthesis; L-tryptophan from chorismate: step 2/5. Functionally, catalyzes the transfer of the phosphoribosyl group of 5-phosphorylribose-1-pyrophosphate (PRPP) to anthranilate to yield N-(5'-phosphoribosyl)-anthranilate (PRA). The sequence is that of Anthranilate phosphoribosyltransferase from Oceanobacillus iheyensis (strain DSM 14371 / CIP 107618 / JCM 11309 / KCTC 3954 / HTE831).